The primary structure comprises 468 residues: Putative BTB/POZ domain and WD-repeat protein R154 (468 aa).

The BTB domain occupies S14–E85. WD repeat units follow at residues H194 to N233, D354 to S398, and L401 to T440.

Belongs to the mimivirus BTB/WD family.

This chain is Putative BTB/POZ domain and WD-repeat protein R154, found in Acanthamoeba polyphaga (Amoeba).